The chain runs to 349 residues: uncharacterized protein (349 aa).

Residues Val-17–Val-37 form a helical membrane-spanning segment. The interval Phe-111–Thr-131 is disordered. The next 3 membrane-spanning stretches (helical) occupy residues Ala-230–Val-250, Val-284–Phe-304, and Val-308–Leu-328.

The protein belongs to the ABC-4 integral membrane protein family.

The protein resides in the cell membrane. This is an uncharacterized protein from Mycobacterium bovis (strain ATCC BAA-935 / AF2122/97).